A 237-amino-acid polypeptide reads, in one-letter code: Coat protein (237 aa).

The interval 1–24 (MSAPASTTQATGSTTSTTTKTAGA) is disordered.

This sequence belongs to the potexvirus capsid protein family.

It localises to the virion. Required for genome encapsidation. Forms ribonucleoprotein complexes along with TGB1 helicase and viral RNA. The chain is Coat protein from Brassica campestris (Field mustard).